A 158-amino-acid chain; its full sequence is Transcription elongation factor GreB (158 aa).

A coiled-coil region spans residues 53–75 (KRRLREIDRRVRFLTKRLEVLQI).

The protein belongs to the GreA/GreB family. GreB subfamily.

In terms of biological role, necessary for efficient RNA polymerase transcription elongation past template-encoded arresting sites. The arresting sites in DNA have the property of trapping a certain fraction of elongating RNA polymerases that pass through, resulting in locked ternary complexes. Cleavage of the nascent transcript by cleavage factors such as GreA or GreB allows the resumption of elongation from the new 3'terminus. GreB releases sequences of up to 9 nucleotides in length. The sequence is that of Transcription elongation factor GreB from Haemophilus influenzae (strain ATCC 51907 / DSM 11121 / KW20 / Rd).